Consider the following 463-residue polypeptide: Glycine--tRNA ligase (463 aa).

Substrate contacts are provided by R100 and E175. Residues 207–209 (RNE), 217–222 (FRTREF), 291–292 (EL), and 335–338 (GADR) each bind ATP. A substrate-binding site is contributed by 222–226 (FEQME). 331-335 (EPSVG) is a substrate binding site.

The protein belongs to the class-II aminoacyl-tRNA synthetase family. As to quaternary structure, homodimer.

It is found in the cytoplasm. It carries out the reaction tRNA(Gly) + glycine + ATP = glycyl-tRNA(Gly) + AMP + diphosphate. Its function is as follows. Catalyzes the attachment of glycine to tRNA(Gly). This is Glycine--tRNA ligase from Clostridium kluyveri (strain NBRC 12016).